The following is a 309-amino-acid chain: Olfactory receptor 8B4 (309 aa).

At 1–25 the chain is on the extracellular side; sequence MTLRNSSSVTEFILVGLSEQPELQL. Residue Asn-5 is glycosylated (N-linked (GlcNAc...) asparagine). The chain crosses the membrane as a helical span at residues 26–46; sequence PLFLLFLGIYVFTVVGNLGLI. Residues 47-54 are Cytoplasmic-facing; it reads TLIGINPS. The helical transmembrane segment at 55 to 75 threads the bilayer; the sequence is LHTPMYFFLFNLSFIDLCYSC. At 76-98 the chain is on the extracellular side; the sequence is VFTPKMLNDFVSESIISYVGCMT. Cys-96 and Cys-188 are joined by a disulfide. The chain crosses the membrane as a helical span at residues 99–119; that stretch reads QLFFFCFFVNSECYVLVSMAY. Topologically, residues 120-138 are cytoplasmic; sequence DRYVAICNPLLYMVTMSPR. Residues 139-159 traverse the membrane as a helical segment; sequence VCFLLMFGSYVVGFAGAMAHT. Over 160 to 196 the chain is Extracellular; sequence GSMLRLTFCDSNVIDHYLCDVLPLLQLSCTSTHVSEL. A helical membrane pass occupies residues 197-216; that stretch reads VFFIVVGVITMLSSISIVIS. Topologically, residues 217–236 are cytoplasmic; the sequence is YALILSNILCIPSAEGRSKA. The chain crosses the membrane as a helical span at residues 237–257; it reads FSTWGSHIIAVALFFGSGTFT. Residues 258-270 are Extracellular-facing; sequence YLTTSFPGSMNHG. The helical transmembrane segment at 271 to 291 threads the bilayer; the sequence is RFASVFYTNVVPMLNPSIYSL. Residues 292–309 lie on the Cytoplasmic side of the membrane; the sequence is RNKDDKLALGKTLKRVLF.

The protein belongs to the G-protein coupled receptor 1 family.

The protein resides in the cell membrane. Odorant receptor. The polypeptide is Olfactory receptor 8B4 (OR8B4) (Homo sapiens (Human)).